Here is a 362-residue protein sequence, read N- to C-terminus: Dihydroorotate dehydrogenase (quinone) (362 aa).

FMN contacts are provided by residues 62-66 (AGYDK) and Thr86. Lys66 contacts substrate. 111-115 (NRLGF) contacts substrate. 2 residues coordinate FMN: Asn139 and Asn170. Asn170 provides a ligand contact to substrate. Ser173 (nucleophile) is an active-site residue. Position 175 (Asn175) interacts with substrate. Lys215 and Ser243 together coordinate FMN. 244–245 (NT) contributes to the substrate binding site. Residues Gly266, Gly295, and 316-317 (YS) each bind FMN.

This sequence belongs to the dihydroorotate dehydrogenase family. Type 2 subfamily. In terms of assembly, monomer. Requires FMN as cofactor.

The protein localises to the cell membrane. The enzyme catalyses (S)-dihydroorotate + a quinone = orotate + a quinol. It participates in pyrimidine metabolism; UMP biosynthesis via de novo pathway; orotate from (S)-dihydroorotate (quinone route): step 1/1. Its function is as follows. Catalyzes the conversion of dihydroorotate to orotate with quinone as electron acceptor. This chain is Dihydroorotate dehydrogenase (quinone), found in Rhizobium etli (strain ATCC 51251 / DSM 11541 / JCM 21823 / NBRC 15573 / CFN 42).